The primary structure comprises 375 residues: Chaperone protein DnaJ (375 aa).

One can recognise a J domain in the interval 5–70; it reads DYYEVLGVER…SKRAAFDQYG (66 aa). The CR-type zinc finger occupies 134–212; that stretch reads GTTVSIRVPT…CHGEGRVEEY (79 aa). Residues Cys147, Cys150, Cys164, Cys167, Cys186, Cys189, Cys200, and Cys203 each coordinate Zn(2+). 4 CXXCXGXG motif repeats span residues 147-154, 164-171, 186-193, and 200-207; these read CQPCDGSG, CPTCGGIG, CPRCHGQG, and CTSCHGEG.

The protein belongs to the DnaJ family. Homodimer. Zn(2+) is required as a cofactor.

The protein resides in the cytoplasm. In terms of biological role, participates actively in the response to hyperosmotic and heat shock by preventing the aggregation of stress-denatured proteins and by disaggregating proteins, also in an autonomous, DnaK-independent fashion. Unfolded proteins bind initially to DnaJ; upon interaction with the DnaJ-bound protein, DnaK hydrolyzes its bound ATP, resulting in the formation of a stable complex. GrpE releases ADP from DnaK; ATP binding to DnaK triggers the release of the substrate protein, thus completing the reaction cycle. Several rounds of ATP-dependent interactions between DnaJ, DnaK and GrpE are required for fully efficient folding. Also involved, together with DnaK and GrpE, in the DNA replication of plasmids through activation of initiation proteins. This is Chaperone protein DnaJ from Pseudomonas putida (strain ATCC 47054 / DSM 6125 / CFBP 8728 / NCIMB 11950 / KT2440).